Here is a 328-residue protein sequence, read N- to C-terminus: Probable fused nickel transport protein LarMN (328 aa).

The next 8 membrane-spanning stretches (helical) occupy residues 8–28 (LSPA…TVAV), 42–62 (LPML…NLPI), 75–95 (LLAV…TLLL), 103–123 (GGIL…PFVG), 138–158 (LGLA…AGIE), 187–207 (MLTA…LLVF), 229–249 (PWIA…LASN), and 296–316 (PVSV…LLLI).

The protein belongs to the CbiM family. NikM subfamily. In terms of assembly, may form an energy-coupling factor (ECF) transporter complex composed of an ATP-binding protein (A component, LarO), a transmembrane protein (T component, LarQ) and a fused possible substrate-capture protein (S component, LarMN) of unknown stoichiometry.

It is found in the cell membrane. Probably part of the energy-coupling factor (ECF) transporter complex LarMNQO involved in nickel import. In Lactiplantibacillus plantarum (strain ATCC BAA-793 / NCIMB 8826 / WCFS1) (Lactobacillus plantarum), this protein is Probable fused nickel transport protein LarMN.